Here is a 385-residue protein sequence, read N- to C-terminus: S-adenosylmethionine synthase (385 aa).

H16 contributes to the ATP binding site. A Mg(2+)-binding site is contributed by D18. Position 44 (E44) interacts with K(+). L-methionine is bound by residues E57 and Q100. The tract at residues 100-110 (QSPDINQGVDR) is flexible loop. ATP-binding positions include 164–166 (DGK), 230–231 (KF), D239, 245–246 (RK), A262, and K266. D239 is an L-methionine binding site. K270 contributes to the L-methionine binding site.

The protein belongs to the AdoMet synthase family. In terms of assembly, homotetramer; dimer of dimers. Mg(2+) serves as cofactor. It depends on K(+) as a cofactor.

The protein localises to the cytoplasm. The enzyme catalyses L-methionine + ATP + H2O = S-adenosyl-L-methionine + phosphate + diphosphate. Its pathway is amino-acid biosynthesis; S-adenosyl-L-methionine biosynthesis; S-adenosyl-L-methionine from L-methionine: step 1/1. In terms of biological role, catalyzes the formation of S-adenosylmethionine (AdoMet) from methionine and ATP. The overall synthetic reaction is composed of two sequential steps, AdoMet formation and the subsequent tripolyphosphate hydrolysis which occurs prior to release of AdoMet from the enzyme. The chain is S-adenosylmethionine synthase from Helicobacter pylori (strain ATCC 700392 / 26695) (Campylobacter pylori).